A 476-amino-acid polypeptide reads, in one-letter code: ATP synthase subunit beta 2 (476 aa).

An ATP-binding site is contributed by 160–167; that stretch reads GGAGVGKT.

The protein belongs to the ATPase alpha/beta chains family. F-type ATPases have 2 components, CF(1) - the catalytic core - and CF(0) - the membrane proton channel. CF(1) has five subunits: alpha(3), beta(3), gamma(1), delta(1), epsilon(1). CF(0) has four main subunits: a(1), b(1), b'(1) and c(9-12).

It is found in the cell inner membrane. The enzyme catalyses ATP + H2O + 4 H(+)(in) = ADP + phosphate + 5 H(+)(out). Produces ATP from ADP in the presence of a proton gradient across the membrane. The catalytic sites are hosted primarily by the beta subunits. The polypeptide is ATP synthase subunit beta 2 (Bradyrhizobium sp. (strain BTAi1 / ATCC BAA-1182)).